The primary structure comprises 284 residues: Serine/arginine-rich splicing factor RS2Z32 (284 aa).

The RRM domain maps to 11–81 (TRLYVGRLSS…SRITVEASRG (71 aa)). The disordered stretch occupies residues 74-97 (ITVEASRGAPRGSRDNGSRGPPPG). CCHC-type zinc fingers lie at residues 99 to 116 (GRCF…DCTA) and 121 to 138 (NKCY…NCKN). The disordered stretch occupies residues 132 to 284 (IERNCKNSPS…RPSPKGSESP (153 aa)). Basic residues predominate over residues 159-180 (RSPRRRRSPSRSRSYSRGRSYS). 3 positions are modified to phosphoserine: S166, S168, and S184. A compositionally biased stretch (basic and acidic residues) spans 186–203 (VRREKSVEDRSRSPKAME). Phosphoserine occurs at positions 205, 207, 214, 216, 225, 235, 255, 265, 277, and 281. A compositionally biased stretch (basic and acidic residues) spans 209–236 (KGRDQSLSPDRKVIDASPKRGSDYDGSP).

Belongs to the splicing factor SR family. RS2Z subfamily. As to quaternary structure, component of the spliceosome. In terms of processing, extensively phosphorylated on serine residues in the RS domain.

The protein resides in the nucleus. Probably involved in intron recognition and spliceosome assembly. The protein is Serine/arginine-rich splicing factor RS2Z32 (RS2Z32) of Arabidopsis thaliana (Mouse-ear cress).